The primary structure comprises 373 residues: tRNA-specific 2-thiouridylase MnmA (373 aa).

Residues 12–19 (GMSGGVDS) and M38 each bind ATP. Residues 98–100 (NPD) form an interaction with target base in tRNA region. C103 serves as the catalytic Nucleophile. Cysteines 103 and 200 form a disulfide. An ATP-binding site is contributed by G127. The interval 150–152 (KDQ) is interaction with tRNA. C200 (cysteine persulfide intermediate) is an active-site residue. The interval 312 to 313 (RY) is interaction with tRNA.

This sequence belongs to the MnmA/TRMU family.

It is found in the cytoplasm. It carries out the reaction S-sulfanyl-L-cysteinyl-[protein] + uridine(34) in tRNA + AH2 + ATP = 2-thiouridine(34) in tRNA + L-cysteinyl-[protein] + A + AMP + diphosphate + H(+). Catalyzes the 2-thiolation of uridine at the wobble position (U34) of tRNA, leading to the formation of s(2)U34. The chain is tRNA-specific 2-thiouridylase MnmA from Streptococcus pyogenes serotype M12 (strain MGAS2096).